The primary structure comprises 179 residues: uncharacterized protein (179 aa).

The helical transmembrane segment at 5-25 (MLAGIGIGVAAALGVAAVASL) threads the bilayer.

It to Rickettsia 17 kDa surface antigen.

It is found in the membrane. This is an uncharacterized protein from Escherichia coli O6:H1 (strain CFT073 / ATCC 700928 / UPEC).